The chain runs to 440 residues: Methylthioribose-1-phosphate isomerase (440 aa).

The Proton donor role is filled by Asp285.

The protein belongs to the eIF-2B alpha/beta/delta subunits family. MtnA subfamily.

Its subcellular location is the cytoplasm. The protein localises to the nucleus. The catalysed reaction is 5-(methylsulfanyl)-alpha-D-ribose 1-phosphate = 5-(methylsulfanyl)-D-ribulose 1-phosphate. It functions in the pathway amino-acid biosynthesis; L-methionine biosynthesis via salvage pathway; L-methionine from S-methyl-5-thio-alpha-D-ribose 1-phosphate: step 1/6. Its function is as follows. Catalyzes the interconversion of methylthioribose-1-phosphate (MTR-1-P) into methylthioribulose-1-phosphate (MTRu-1-P). This Botryotinia fuckeliana (strain B05.10) (Noble rot fungus) protein is Methylthioribose-1-phosphate isomerase (mri1).